We begin with the raw amino-acid sequence, 519 residues long: Asteroid homolog 1 (519 aa).

The protein belongs to the asteroid family.

Its subcellular location is the cytoplasm. The protein resides in the mitochondrion. The sequence is that of Asteroid homolog 1 (ast1) from Schizosaccharomyces pombe (strain 972 / ATCC 24843) (Fission yeast).